Consider the following 194-residue polypeptide: Type II restriction enzyme OkrAI (194 aa).

Mg(2+)-binding residues include Glu71, Asp86, and Trp100. The active-site Proton acceptor is the Glu101.

As to quaternary structure, homodimer. Mg(2+) serves as cofactor.

It carries out the reaction Endonucleolytic cleavage of DNA to give specific double-stranded fragments with terminal 5'-phosphates.. Its function is as follows. A P subtype restriction enzyme that recognizes the double-stranded sequence 5'-GGATCC-3' and cleaves after G-1. In Oceanobacter kriegii (Oceanospirillum kriegii), this protein is Type II restriction enzyme OkrAI.